The primary structure comprises 302 residues: O-antigen biosynthesis glycosyltransferase WbnK (302 aa).

This sequence belongs to the glycosyltransferase 11 family.

The enzyme catalyses beta-D-Gal-(1-&gt;3)-alpha-D-GalNAc-(1-&gt;3)-alpha-D-GalNAc-di-trans,octa-cis-undecaprenyl diphosphate + GDP-beta-L-fucose = alpha-L-Fuc-(1-&gt;2)-beta-D-Gal-(1-&gt;3)-alpha-D-GalNAc-(1-&gt;3)-alpha-D-GalNAc-di-trans,octa-cis-undecaprenyl diphosphate + GDP + H(+). It participates in bacterial outer membrane biogenesis; LPS O-antigen biosynthesis. Functionally, involved in the assembly of the O-repeating unit during O-antigen biosynthesis. This chain is O-antigen biosynthesis glycosyltransferase WbnK, found in Escherichia coli.